The sequence spans 1500 residues: Secreted chitinase LysM12 (1500 aa).

An N-terminal signal peptide occupies residues 1 to 23 (MAPLWNGMAAGLLLSAAVVSGQA). N-linked (GlcNAc...) asparagine glycosylation is found at N53, N225, N251, and N270. 2 LysM domains span residues 303–348 (RTQK…HVCC) and 367–415 (ATTT…VICI). A Chitin-binding type-1 domain is found at 428–496 (DAECGPQVPG…TNGCISHCGM (69 aa)). 4 disulfide bridges follow: C431–C459, C453–C465, C458–C472, and C490–C494. The GH18 domain occupies 507 to 879 (FRSVGYYESY…PGMILQMKSG (373 aa)). The active-site Proton donor is the E625. Y626 provides a ligand contact to chitin. N-linked (GlcNAc...) asparagine glycosylation is found at N721 and N800. W852 serves as a coordination point for chitin. Residues N892 and N983 are each glycosylated (N-linked (GlcNAc...) asparagine). The interval 1164–1193 (IPKDIPYPDKTKRKDKDDDDNKKTEATDSE) is disordered. Positions 1169–1193 (PYPDKTKRKDKDDDDNKKTEATDSE) are enriched in basic and acidic residues.

It belongs to the glycosyl hydrolase 18 family. Chitinase class V subfamily.

It localises to the secreted. The enzyme catalyses Random endo-hydrolysis of N-acetyl-beta-D-glucosaminide (1-&gt;4)-beta-linkages in chitin and chitodextrins.. Its function is as follows. Secreted chitinase involved in the degradation of chitin, a component of the cell walls of fungi and exoskeletal elements of some animals (including worms and arthropods). Involved in pathogenesis via manipulation of host defenses for successful infection. The polypeptide is Secreted chitinase LysM12 (Penicillium expansum (Blue mold rot fungus)).